A 269-amino-acid chain; its full sequence is Imidazoleglycerol-phosphate dehydratase 2, chloroplastic (269 aa).

The N-terminal 51 residues, Met1–Met51, are a transit peptide targeting the chloroplast. Substrate is bound by residues Glu83, His109–His117, His135–Glu139, Arg161, and Arg183. His109, His135, His136, and Glu139 together coordinate Mn(2+). Mn(2+) is bound by residues His207, His231, His232, and Glu235. Residues His231–Lys239 and Ser261–Lys263 contribute to the substrate site.

It belongs to the imidazoleglycerol-phosphate dehydratase family. The cofactor is Mn(2+).

It is found in the plastid. The protein resides in the chloroplast. It catalyses the reaction D-erythro-1-(imidazol-4-yl)glycerol 3-phosphate = 3-(imidazol-4-yl)-2-oxopropyl phosphate + H2O. The protein operates within amino-acid biosynthesis; L-histidine biosynthesis; L-histidine from 5-phospho-alpha-D-ribose 1-diphosphate: step 6/9. The chain is Imidazoleglycerol-phosphate dehydratase 2, chloroplastic from Triticum aestivum (Wheat).